The primary structure comprises 284 residues: RAD52 motif-containing protein 1 (284 aa).

The segment at 1 to 92 (MAELVPFAVP…KQLFQKSPVK (92 aa)) is necessary for nuclear localization and for nucleolar accumulation in response to heat shock. The RRM domain maps to 15 to 98 (KTLLVWELSS…SPVKVRLGTR (84 aa)). The tract at residues 90–133 (PVKVRLGTRHKAVQHQALALNSSKCQELANYYFGFNGCSKRIIK) is necessary for nuclear and nucleolar localization.

Homodimer. Expressed in testis.

Its subcellular location is the nucleus. The protein localises to the cytoplasm. It is found in the nucleolus. It localises to the PML body. The protein resides in the cajal body. In terms of biological role, may confer resistance to the antitumor agent cisplatin. Binds to DNA and RNA. The chain is RAD52 motif-containing protein 1 (RDM1) from Homo sapiens (Human).